The following is a 121-amino-acid chain: Small ribosomal subunit protein bS6m (121 aa).

Belongs to the bacterial ribosomal protein bS6 family. In terms of assembly, component of the mitochondrial ribosome small subunit (28S) which comprises a 12S rRNA and about 30 distinct proteins.

It localises to the mitochondrion. This chain is Small ribosomal subunit protein bS6m (MRPS6), found in Gallus gallus (Chicken).